The chain runs to 612 residues: MPEYRSKTSTHGRNMAGARALWRATGMQDGDFQKPIIAIANSFTQFVPGHVHLKDLGQLVAREIERVGGVAKEFDTIAVDDGIAMGHDGMLYSLPSREIIADSVEYMVNAHCADALVCISNCDKITPGMLMAALRLNIPTVFVSGGPMEAGKTALAEHKLDLIDAMVIAADDSASDEKVAEFERSACPTCGSCSGMFTANSMNCLTEALGLSLPGNGTVVATHADREQLFLRAGRVAVELCHRWYGGEDPTALPRGIATFEAFENAMTLDIAMGGSTNTILHLLAAAQEGEVPFGMQDIDRLSKRVPQLCKVAPNTPKYHIEDVHRAGGIMAILGELARGGLLHTTAATVHARTLADAIAHWDVTQTVDENVHTFYKAGPAGIPTQIAFSQATRWDSLDTDRSEGCIRDVAHALSQEGGLAVLYGNIARDGCVVKTAGVDESIHVFEGTARVFESQDAAVKSILADEVKAGDVVVIRYEGPKGGPGMQEMLYPTSYLKSKGLGKQCALLTDGRFSGGTSGLSIGHASPEAAAGGAIGLVRDGDKILIDIPNRGINLLISDEALASRRAEQDAKGWKPVEVRPRKVTTALKAYALLATSADKGAVRDKALLDG.

Position 81 (aspartate 81) interacts with Mg(2+). [2Fe-2S] cluster is bound at residue cysteine 122. Positions 123 and 124 each coordinate Mg(2+). Position 124 is an N6-carboxylysine (lysine 124). Cysteine 193 is a binding site for [2Fe-2S] cluster. Residue glutamate 489 coordinates Mg(2+). The active-site Proton acceptor is the serine 515.

The protein belongs to the IlvD/Edd family. As to quaternary structure, homodimer. Requires [2Fe-2S] cluster as cofactor. Mg(2+) is required as a cofactor.

The enzyme catalyses (2R)-2,3-dihydroxy-3-methylbutanoate = 3-methyl-2-oxobutanoate + H2O. The catalysed reaction is (2R,3R)-2,3-dihydroxy-3-methylpentanoate = (S)-3-methyl-2-oxopentanoate + H2O. It participates in amino-acid biosynthesis; L-isoleucine biosynthesis; L-isoleucine from 2-oxobutanoate: step 3/4. It functions in the pathway amino-acid biosynthesis; L-valine biosynthesis; L-valine from pyruvate: step 3/4. Its function is as follows. Functions in the biosynthesis of branched-chain amino acids. Catalyzes the dehydration of (2R,3R)-2,3-dihydroxy-3-methylpentanoate (2,3-dihydroxy-3-methylvalerate) into 2-oxo-3-methylpentanoate (2-oxo-3-methylvalerate) and of (2R)-2,3-dihydroxy-3-methylbutanoate (2,3-dihydroxyisovalerate) into 2-oxo-3-methylbutanoate (2-oxoisovalerate), the penultimate precursor to L-isoleucine and L-valine, respectively. This chain is Dihydroxy-acid dehydratase, found in Xanthomonas oryzae pv. oryzae (strain MAFF 311018).